We begin with the raw amino-acid sequence, 199 residues long: FMN-dependent NADH:quinone oxidoreductase (199 aa).

Residue 17 to 19 (SYS) coordinates FMN.

The protein belongs to the azoreductase type 1 family. As to quaternary structure, homodimer. FMN serves as cofactor.

It carries out the reaction 2 a quinone + NADH + H(+) = 2 a 1,4-benzosemiquinone + NAD(+). The catalysed reaction is N,N-dimethyl-1,4-phenylenediamine + anthranilate + 2 NAD(+) = 2-(4-dimethylaminophenyl)diazenylbenzoate + 2 NADH + 2 H(+). Its function is as follows. Quinone reductase that provides resistance to thiol-specific stress caused by electrophilic quinones. Functionally, also exhibits azoreductase activity. Catalyzes the reductive cleavage of the azo bond in aromatic azo compounds to the corresponding amines. This Mycoplasmopsis synoviae (strain 53) (Mycoplasma synoviae) protein is FMN-dependent NADH:quinone oxidoreductase.